Consider the following 1694-residue polypeptide: Homeobox-DDT domain protein RLT2 (1694 aa).

Residues 1-24 are disordered; that stretch reads MEGGSEKTTPEGCGGESKSKRKMK. The homeobox DNA-binding region spans 17 to 76; the sequence is SKSKRKMKTAAQLEVLENTYSAEPYPSEAIRADLSVKLNLSDRQLQMWFCHRRLKERKST. The DDT domain maps to 514-573; that stretch reads DENVANLLMVWRFLITFADVLGLWPFTLDEFAQAFHDYDPRLMGEIHIVLLKTIIKDIEG. Positions 696–765 constitute an HTH HARE-type domain; it reads GTVKFAAFHV…APSTYCVRAS (70 aa). The segment covering 795–816 has biased composition (acidic residues); it reads EDVDDAERDEDSESDVGEDPEV. Disordered stretches follow at residues 795-822, 1450-1541, 1555-1639, and 1655-1674; these read EDVD…NLKK, KQEE…ICNE, AKTS…MNMK, and EDSY…AATR. 2 positions are modified to phosphoserine: Ser806 and Ser808. The span at 1459 to 1470 shows a compositional bias: gly residues; the sequence is GLGGVSSSGRGG. Basic residues-rich tracts occupy residues 1471–1485 and 1515–1531; these read RPPR…RGNG and GGRK…RKRP. 3 stretches are compositionally biased toward acidic residues: residues 1561-1578, 1589-1605, and 1624-1635; these read DNDD…DDGE, EDYD…DFDG, and DEYEEEEEEEED.

In terms of assembly, interacts with CHR11. Interacts (via the DDT domain) with CHR11 (via C-terminus). As to expression, highly expressed in growing tissues such as inflorescence and flower meristems, young leaves and floral organs. Expressed in roots, rosette and cauline leaves, stems, flowers, inflorescences and siliques.

Its subcellular location is the nucleus. Transcriptional regulator required for the maintenance of the plant vegetative phase. In association with CHR11 or CHR17 may prevent the early activation of the vegetative-to-reproductive transition by regulating key genes that contribute to flower timing, such as FT, SEP1, SEP3, AGL8/FUL, SOC1 and FLC. Involved in the transcriptional regulation of seed-specific gene expression. This is Homeobox-DDT domain protein RLT2 from Arabidopsis thaliana (Mouse-ear cress).